Consider the following 282-residue polypeptide: Sulfur carrier protein FdhD (282 aa).

Residue C115 is the Cysteine persulfide intermediate of the active site.

This sequence belongs to the FdhD family.

The protein localises to the cytoplasm. In terms of biological role, required for formate dehydrogenase (FDH) activity. Acts as a sulfur carrier protein that transfers sulfur from IscS to the molybdenum cofactor prior to its insertion into FDH. This Streptomyces avermitilis (strain ATCC 31267 / DSM 46492 / JCM 5070 / NBRC 14893 / NCIMB 12804 / NRRL 8165 / MA-4680) protein is Sulfur carrier protein FdhD.